A 251-amino-acid polypeptide reads, in one-letter code: Probable phosphatase Sama_2233 (251 aa).

9 residues coordinate Zn(2+): H8, H10, H16, H41, E74, H102, H132, D193, and H195.

This sequence belongs to the PHP family. The cofactor is Zn(2+).

This chain is Probable phosphatase Sama_2233, found in Shewanella amazonensis (strain ATCC BAA-1098 / SB2B).